We begin with the raw amino-acid sequence, 409 residues long: Ribose-phosphate pyrophosphokinase 3, chloroplastic (409 aa).

Low complexity-rich tracts occupy residues 1–16 and 34–43; these read MATAASASASASPAAA and PASAFARPSP. Residues 1 to 43 form a disordered region; it reads MATAASASASASPAAAFGAKTRRPGPSPSPSPSPASAFARPSP. The transit peptide at 1 to 44 directs the protein to the chloroplast; sequence MATAASASASASPAAAFGAKTRRPGPSPSPSPSPASAFARPSPR. Mg(2+) contacts are provided by D229 and H231. The segment at 312–327 is binding of phosphoribosylpyrophosphate; the sequence is GRHVVIVDDLVQSGGT.

The protein belongs to the ribose-phosphate pyrophosphokinase family. Requires Mg(2+) as cofactor.

The protein localises to the plastid. Its subcellular location is the chloroplast. The enzyme catalyses D-ribose 5-phosphate + ATP = 5-phospho-alpha-D-ribose 1-diphosphate + AMP + H(+). This chain is Ribose-phosphate pyrophosphokinase 3, chloroplastic, found in Oryza sativa subsp. japonica (Rice).